Consider the following 65-residue polypeptide: Kassorin-M (65 aa).

Positions 1–22 (MLTLKKSMLLLFFLGMVSFSLA) are cleaved as a signal peptide. A propeptide spanning residues 23–51 (DDKREDEAEEGEDKRADEGEEKRAAEKKR) is cleaved from the precursor. The tract at residues 24 to 45 (DKREDEAEEGEDKRADEGEEKR) is disordered. The residue at position 64 (leucine 64) is a Leucine amide.

This sequence belongs to the frog skin active peptide (FSAP) family. Brevinin subfamily. Expressed by the skin glands.

The protein localises to the secreted. Induces contraction of smooth muscle in isolated guinea pig urinary bladder (EC50=4.66 nM). Has no antimicrobial activity against the Gram-positive bacterium S.aureus, the Gram-negative bacterium E.coli and the yeast C.albicans. Elicits histamine release from rat peritoneal mast cells. This is Kassorin-M from Phlyctimantis maculatus (Red-legged running frog).